Consider the following 127-residue polypeptide: Large ribosomal subunit protein bL12 (127 aa).

It belongs to the bacterial ribosomal protein bL12 family. Homodimer. Part of the ribosomal stalk of the 50S ribosomal subunit. Forms a multimeric L10(L12)X complex, where L10 forms an elongated spine to which 2 to 4 L12 dimers bind in a sequential fashion. Binds GTP-bound translation factors.

Its function is as follows. Forms part of the ribosomal stalk which helps the ribosome interact with GTP-bound translation factors. Is thus essential for accurate translation. This chain is Large ribosomal subunit protein bL12, found in Streptomyces avermitilis (strain ATCC 31267 / DSM 46492 / JCM 5070 / NBRC 14893 / NCIMB 12804 / NRRL 8165 / MA-4680).